The primary structure comprises 270 residues: Cytochrome c oxidase subunit 3 (270 aa).

7 helical membrane-spanning segments follow: residues 21–41 (PWPFVASFSALIILLGGVLYF), 46–66 (GSLVILFFGIFFLLLIIFVWW), 90–110 (GIMLFIFSEVILFIAFFWAFF), 131–151 (FFSPWDIPFLNTIILLLSGCA), 167–187 (AIFSLILTIGLALIFTIFQIY), 205–225 (FFMITGLHGFHVIVGTFFLFV), and 248–268 (WYWHFVDVVWLFLFVSIYWWG).

The protein belongs to the cytochrome c oxidase subunit 3 family. As to quaternary structure, component of the cytochrome c oxidase (complex IV, CIV), a multisubunit enzyme composed of a catalytic core of 3 subunits and several supernumerary subunits. The complex exists as a monomer or a dimer and forms supercomplexes (SCs) in the inner mitochondrial membrane with ubiquinol-cytochrome c oxidoreductase (cytochrome b-c1 complex, complex III, CIII).

It localises to the mitochondrion inner membrane. It catalyses the reaction 4 Fe(II)-[cytochrome c] + O2 + 8 H(+)(in) = 4 Fe(III)-[cytochrome c] + 2 H2O + 4 H(+)(out). Functionally, component of the cytochrome c oxidase, the last enzyme in the mitochondrial electron transport chain which drives oxidative phosphorylation. The respiratory chain contains 3 multisubunit complexes succinate dehydrogenase (complex II, CII), ubiquinol-cytochrome c oxidoreductase (cytochrome b-c1 complex, complex III, CIII) and cytochrome c oxidase (complex IV, CIV), that cooperate to transfer electrons derived from NADH and succinate to molecular oxygen, creating an electrochemical gradient over the inner membrane that drives transmembrane transport and the ATP synthase. Cytochrome c oxidase is the component of the respiratory chain that catalyzes the reduction of oxygen to water. Electrons originating from reduced cytochrome c in the intermembrane space (IMS) are transferred via the dinuclear copper A center (CU(A)) of subunit 2 and heme A of subunit 1 to the active site in subunit 1, a binuclear center (BNC) formed by heme A3 and copper B (CU(B)). The BNC reduces molecular oxygen to 2 water molecules using 4 electrons from cytochrome c in the IMS and 4 protons from the mitochondrial matrix. This is Cytochrome c oxidase subunit 3 (COX3) from Cyanidium caldarium (Red alga).